The sequence spans 198 residues: Regulation of enolase protein 1 (198 aa).

It localises to the cytoplasm. Functionally, functions in the galactose metabolic pathway via the GAL83 protein and that it may control the level of ENO1. In Saccharomyces cerevisiae (strain ATCC 204508 / S288c) (Baker's yeast), this protein is Regulation of enolase protein 1 (REE1).